Reading from the N-terminus, the 178-residue chain is MYFLFFFLLFLFPVGVKGVEEELRALEGEDVSFYGEERALAFFLLIGREDGKFQELCSGGNCSSCSAFAGRVRFKERQFTLSKVQVRETGTRFKVRSRHAKGNSTLLCYKLTVAKFRPVLVPVVLSGFSIGLSCVDHSNPWGFSAVFIWDMNHRGTTDGRGGITGGKKWVSALARAAF.

The N-terminal stretch at 1–18 (MYFLFFFLLFLFPVGVKG) is a signal peptide.

This Pantherophis guttatus (Corn snake) protein is Protein 105R.